Here is a 63-residue protein sequence, read N- to C-terminus: Large ribosomal subunit protein bL28 (63 aa).

Belongs to the bacterial ribosomal protein bL28 family.

This is Large ribosomal subunit protein bL28 from Clostridium botulinum (strain Alaska E43 / Type E3).